A 262-amino-acid polypeptide reads, in one-letter code: Carbonic anhydrase 1 (262 aa).

An N-acetylalanine modification is found at alanine 2. An Alpha-carbonic anhydrase domain is found at 4 to 261 (LNWSYEGENG…LKGRQVKASF (258 aa)). Histidine 65 serves as the catalytic Proton donor/acceptor. Positions 95, 97, and 120 each coordinate Zn(2+). Substrate-binding positions include threonine 200 and 200–201 (TH).

This sequence belongs to the alpha-carbonic anhydrase family. The cofactor is Zn(2+).

It is found in the cytoplasm. The catalysed reaction is hydrogencarbonate + H(+) = CO2 + H2O. It carries out the reaction urea = cyanamide + H2O. With respect to regulation, inhibited by acetazolamide. In terms of biological role, catalyzes the reversible hydration of carbon dioxide. Can hydrate cyanamide to urea. The sequence is that of Carbonic anhydrase 1 (CA1) from Monodelphis domestica (Gray short-tailed opossum).